We begin with the raw amino-acid sequence, 140 residues long: uncharacterized protein (140 aa).

Transmembrane regions (helical) follow at residues 20 to 42, 88 to 110, and 115 to 137; these read ILYY…YVSG, FVAL…PVLL, and IIYT…GLLQ.

It localises to the cell membrane. This is an uncharacterized protein from Archaeoglobus fulgidus (strain ATCC 49558 / DSM 4304 / JCM 9628 / NBRC 100126 / VC-16).